A 438-amino-acid chain; its full sequence is Thymidine phosphorylase (438 aa).

Belongs to the thymidine/pyrimidine-nucleoside phosphorylase family. In terms of assembly, homodimer.

It catalyses the reaction thymidine + phosphate = 2-deoxy-alpha-D-ribose 1-phosphate + thymine. It functions in the pathway pyrimidine metabolism; dTMP biosynthesis via salvage pathway; dTMP from thymine: step 1/2. In terms of biological role, the enzymes which catalyze the reversible phosphorolysis of pyrimidine nucleosides are involved in the degradation of these compounds and in their utilization as carbon and energy sources, or in the rescue of pyrimidine bases for nucleotide synthesis. In Agrobacterium fabrum (strain C58 / ATCC 33970) (Agrobacterium tumefaciens (strain C58)), this protein is Thymidine phosphorylase.